An 88-amino-acid polypeptide reads, in one-letter code: EMBRYO SURROUNDING FACTOR 1-like protein 7 (88 aa).

The N-terminal stretch at methionine 1 to serine 22 is a signal peptide. 4 disulfides stabilise this stretch: cysteine 41-cysteine 57, cysteine 46-cysteine 85, cysteine 55-cysteine 81, and cysteine 58-cysteine 68.

Belongs to the MEG family. Expressed in leaves and flowers.

This is EMBRYO SURROUNDING FACTOR 1-like protein 7 (ESFL7) from Arabidopsis thaliana (Mouse-ear cress).